The primary structure comprises 358 residues: Tetraacyldisaccharide 4'-kinase (358 aa).

71-78 contributes to the ATP binding site; sequence IAGGAGKT.

The protein belongs to the LpxK family.

The catalysed reaction is a lipid A disaccharide + ATP = a lipid IVA + ADP + H(+). Its pathway is glycolipid biosynthesis; lipid IV(A) biosynthesis; lipid IV(A) from (3R)-3-hydroxytetradecanoyl-[acyl-carrier-protein] and UDP-N-acetyl-alpha-D-glucosamine: step 6/6. Functionally, transfers the gamma-phosphate of ATP to the 4'-position of a tetraacyldisaccharide 1-phosphate intermediate (termed DS-1-P) to form tetraacyldisaccharide 1,4'-bis-phosphate (lipid IVA). This chain is Tetraacyldisaccharide 4'-kinase, found in Methylibium petroleiphilum (strain ATCC BAA-1232 / LMG 22953 / PM1).